Reading from the N-terminus, the 175-residue chain is Apoptosis regulator Bcl-2 homolog (175 aa).

The helical transmembrane segment at 152–174 (YYVTRYFRVAAFIITSLAVINLF) threads the bilayer.

Interacts with host BAK1 and BAX as well as other BH3-containing proteins including BIM, BID or PUMA.

Its subcellular location is the host membrane. Plays a role in the inhibition of host apoptosis. Interacts with host proapoptotic factors BAK1 and BAX to supposedly prevent their activation. The protein is Apoptosis regulator Bcl-2 homolog (CNPV058) of Canarypox virus (CNPV).